Consider the following 540-residue polypeptide: uncharacterized protein (540 aa).

ABC transporter domains follow at residues 2 to 252 (IAVN…KLSQ) and 320 to 537 (LRVE…LTEL). Residue 34–41 (GANGAGKS) participates in ATP binding.

It belongs to the ABC transporter superfamily.

This is an uncharacterized protein from Bacillus subtilis (strain 168).